The sequence spans 254 residues: Major prion protein (254 aa).

A signal peptide spans 1 to 22; the sequence is MANLGYWLLALFVATWTDVGLC. Positions 23–231 are interaction with GRB2, ERI3 and SYN1; the sequence is KKRPKPGGWN…SQAYYDGRRS (209 aa). Residues 25–107 form a disordered region; sequence RPKPGGWNTG…QWNKPSKPKT (83 aa). 5 tandem repeats follow at residues 51–59, 60–67, 68–75, 76–83, and 84–91. A 5 X 8 AA tandem repeats of P-H-G-G-G-W-G-Q region spans residues 51–91; it reads PQGGGTWGQPHGGGWGQPHGGGWGQPHGGGWGQPHGGGWGQ. The segment covering 52–95 has biased composition (gly residues); it reads QGGGTWGQPHGGGWGQPHGGGWGQPHGGGWGQPHGGGWGQGGGT. Residues histidine 61, glycine 62, glycine 63, histidine 69, glycine 70, glycine 71, histidine 77, glycine 78, glycine 79, histidine 85, glycine 86, and glycine 87 each contribute to the Cu(2+) site. Cysteine 179 and cysteine 214 are oxidised to a cystine. N-linked (GlcNAc...) asparagine glycosylation is found at asparagine 181 and asparagine 197. Residue serine 231 is the site of GPI-anchor amidated serine attachment. A propeptide spans 232-254 (removed in mature form); it reads SAVLFSSPPMILLISFLIFLIVG.

This sequence belongs to the prion family. Monomer and homodimer. Has a tendency to aggregate into amyloid fibrils containing a cross-beta spine, formed by a steric zipper of superposed beta-strands. Soluble oligomers may represent an intermediate stage on the path to fibril formation. Copper binding may promote oligomerization. Interacts with GRB2, APP, ERI3/PRNPIP and SYN1. Mislocalized cytosolically exposed PrP interacts with MGRN1; this interaction alters MGRN1 subcellular location and causes lysosomal enlargement. Interacts with KIAA1191.

It localises to the cell membrane. The protein localises to the golgi apparatus. Its primary physiological function is unclear. Has cytoprotective activity against internal or environmental stresses. May play a role in neuronal development and synaptic plasticity. May be required for neuronal myelin sheath maintenance. May play a role in iron uptake and iron homeostasis. Soluble oligomers are toxic to cultured neuroblastoma cells and induce apoptosis (in vitro). Association with GPC1 (via its heparan sulfate chains) targets PRNP to lipid rafts. Also provides Cu(2+) or Zn(2+) for the ascorbate-mediated GPC1 deaminase degradation of its heparan sulfate side chains. This chain is Major prion protein (PRNP), found in Sigmodon hispidus (Hispid cotton rat).